The following is a 255-amino-acid chain: EEF1A lysine methyltransferase 4 (255 aa).

Residues tryptophan 26 and tyrosine 30 each contribute to the S-adenosyl-L-methionine site. The residue at position 39 (tyrosine 39) is a Phosphotyrosine. Residues tryptophan 41, glycine 66, 88 to 89 (DY), 113 to 114 (DV), and lysine 130 each bind S-adenosyl-L-methionine. A Required for methyltransferase activity motif is present at residues 129–134 (EKGTLD).

This sequence belongs to the methyltransferase superfamily.

It catalyses the reaction L-lysyl-[protein] + S-adenosyl-L-methionine = N(6)-methyl-L-lysyl-[protein] + S-adenosyl-L-homocysteine + H(+). It carries out the reaction N(6)-methyl-L-lysyl-[protein] + S-adenosyl-L-methionine = N(6),N(6)-dimethyl-L-lysyl-[protein] + S-adenosyl-L-homocysteine + H(+). The enzyme catalyses N(6),N(6)-dimethyl-L-lysyl-[protein] + S-adenosyl-L-methionine = N(6),N(6),N(6)-trimethyl-L-lysyl-[protein] + S-adenosyl-L-homocysteine + H(+). In terms of biological role, protein-lysine methyltransferase that efficiently catalyzes three successive methylations on 'Lys-36' in eukaryotic translation elongation factor 1 alpha (EEF1A1 or EEF1A2). In Mus musculus (Mouse), this protein is EEF1A lysine methyltransferase 4.